The chain runs to 439 residues: Fibulin-7 (439 aa).

Positions 1–24 (MVPSSPRALFLLLLILACPEPRAS) are cleaved as a signal peptide. Residues 28–53 (LSKQQLLSAIRQLQQLLKGQETRFAE) are a coiled coil. Residues 79 to 136 (VSCPALNTPADGRKFGSKYLVDHEVHFTCNPGFRLVGPSSVVCLPNGTWTGEQPHCRG) enclose the Sushi domain. 11 disulfides stabilise this stretch: C81–C121, C107–C134, C140–C151, C145–C160, C162–C171, C228–C244, C240–C253, C255–C268, C274–C287, C281–C296, and C301–C318. A glycan (N-linked (GlcNAc...) asparagine) is linked at N124. The EGF-like 1; calcium-binding domain occupies 136 to 172 (GISECSSQPCQNGGTCVEGVNQYRCICPPGRTGNRCQ). Residues 224 to 269 (DVNECELYGQEGRPRLCMHACVNTPGSYRCTCPGGYRTLADGKSCE) form the EGF-like 2; calcium-binding domain. The EGF-like 3; calcium-binding domain maps to 270 to 319 (DVDECVGLQPVCPQGTTCINTGGSFQCVSPECPEGSGNVSYVKTSPFQCE). Residue N307 is glycosylated (N-linked (GlcNAc...) asparagine).

Belongs to the fibulin family. As to quaternary structure, interacts with heparin, FBLN1, FN1 and DSPP. Preferentially binds dental mesenchyme cells and odontoblasts but not dental epithelial cells or nondental cells. Binding requires a heparan sulfate-containing receptor on the cell surface as well as an integrin. In terms of processing, N-glycosylated.

It localises to the secreted. Its subcellular location is the extracellular space. It is found in the extracellular matrix. Functionally, an adhesion molecule that interacts with extracellular matrix molecules in developing teeth and may play important roles in differentiation and maintenance of odontoblasts as well as in dentin formation. The chain is Fibulin-7 (FBLN7) from Homo sapiens (Human).